The primary structure comprises 173 residues: Glutamyl-tRNA(Gln) amidotransferase subunit F, mitochondrial (173 aa).

A mitochondrion-targeting transit peptide spans M1 to T15.

Belongs to the GatF family. Subunit of the heterotrimeric GatFAB amidotransferase (AdT) complex, composed of A, B and F subunits.

Its subcellular location is the mitochondrion inner membrane. It catalyses the reaction L-glutamyl-tRNA(Gln) + L-glutamine + ATP + H2O = L-glutaminyl-tRNA(Gln) + L-glutamate + ADP + phosphate + H(+). Functionally, allows the formation of correctly charged Gln-tRNA(Gln) through the transamidation of misacylated Glu-tRNA(Gln) in the mitochondria. The reaction takes place in the presence of glutamine and ATP through an activated gamma-phospho-Glu-tRNA(Gln). Required for proper protein synthesis within the mitochondrion. In Candida glabrata (strain ATCC 2001 / BCRC 20586 / JCM 3761 / NBRC 0622 / NRRL Y-65 / CBS 138) (Yeast), this protein is Glutamyl-tRNA(Gln) amidotransferase subunit F, mitochondrial.